We begin with the raw amino-acid sequence, 340 residues long: DNA-directed RNA polymerase subunit alpha (340 aa).

Residues 1–236 (MLSLSKNWNT…EQLQLFISFE (236 aa)) form an alpha N-terminal domain (alpha-NTD) region. Residues 246 to 340 (TDALPFSPYL…LSNRYEDSYN (95 aa)) are alpha C-terminal domain (alpha-CTD).

This sequence belongs to the RNA polymerase alpha chain family. As to quaternary structure, homodimer. The RNAP catalytic core consists of 2 alpha, 1 beta, 1 beta' and 1 omega subunit. When a sigma factor is associated with the core the holoenzyme is formed, which can initiate transcription.

The catalysed reaction is RNA(n) + a ribonucleoside 5'-triphosphate = RNA(n+1) + diphosphate. In terms of biological role, DNA-dependent RNA polymerase catalyzes the transcription of DNA into RNA using the four ribonucleoside triphosphates as substrates. This chain is DNA-directed RNA polymerase subunit alpha, found in Rickettsia felis (strain ATCC VR-1525 / URRWXCal2) (Rickettsia azadi).